Consider the following 471-residue polypeptide: Maintenance of mitochondrial morphology protein 1 (471 aa).

Residues 1–21 (MSSPQNTSCPPSQHSLSFTQG) are Lumenal-facing. A helical membrane pass occupies residues 22-42 (LLLGQLSVVLLIGAFIKFFIF). Residues 43–471 (GESPSSSSRG…GSLPGAPAVA (429 aa)) lie on the Cytoplasmic side of the membrane. Residues 128 to 370 (QPESLDWFNV…EPRVQLVALP (243 aa)) enclose the SMP-LTD domain. Disordered regions lie at residues 271–306 (GTTESSPHLPHPENQNESKPSRQDPEIPTNKDGVRS), 395–415 (EDPATKATHSGFTPVNANRDG), and 448–471 (RGDTQSVGEQLRIPGSLPGAPAVA). Positions 280–295 (PHPENQNESKPSRQDP) are enriched in basic and acidic residues. Residues 401–410 (ATHSGFTPVN) show a composition bias toward polar residues.

This sequence belongs to the MMM1 family. As to quaternary structure, homodimer. Component of the ER-mitochondria encounter structure (ERMES) or MDM complex, composed of MMM1, MDM10, MDM12 and MDM34. An MMM1 homodimer associates with one molecule of MDM12 on each side in a pairwise head-to-tail manner, and the SMP-LTD domains of MMM1 and MDM12 generate a continuous hydrophobic tunnel for phospholipid trafficking.

Its subcellular location is the endoplasmic reticulum membrane. In terms of biological role, component of the ERMES/MDM complex, which serves as a molecular tether to connect the endoplasmic reticulum (ER) and mitochondria. Components of this complex are involved in the control of mitochondrial shape and protein biogenesis, and function in nonvesicular lipid trafficking between the ER and mitochondria. The MDM12-MMM1 subcomplex functions in the major beta-barrel assembly pathway that is responsible for biogenesis of all outer membrane beta-barrel proteins, and acts in a late step after the SAM complex. The MDM10-MDM12-MMM1 subcomplex further acts in the TOM40-specific pathway after the action of the MDM12-MMM1 complex. Essential for establishing and maintaining the structure of mitochondria and maintenance of mtDNA nucleoids. The protein is Maintenance of mitochondrial morphology protein 1 of Arthroderma otae (strain ATCC MYA-4605 / CBS 113480) (Microsporum canis).